We begin with the raw amino-acid sequence, 269 residues long: Interleukin-1 beta (269 aa).

Positions 1 to 116 (MAEVPELASE…TRNNDACVHD (116 aa)) are excised as a propeptide.

The protein belongs to the IL-1 family. Monomer. In its precursor form, weakly interacts with full-length MEFV; the mature cytokine does not interact at all. Interacts with integrins ITGAV:ITGBV and ITGA5:ITGB1; integrin-binding is required for IL1B signaling. Interacts with cargo receptor TMED10; the interaction is direct and is required for the secretion of IL1B mature form. Interacts with HSP90AB1; the interaction facilitates cargo translocation into the ERGIC. Interacts with HSP90B1; the interaction facilitates cargo translocation into the ERGIC.

It is found in the cytoplasm. Its subcellular location is the cytosol. The protein resides in the secreted. It localises to the lysosome. The protein localises to the extracellular exosome. In terms of biological role, potent pro-inflammatory cytokine. Initially discovered as the major endogenous pyrogen, induces prostaglandin synthesis, neutrophil influx and activation, T-cell activation and cytokine production, B-cell activation and antibody production, and fibroblast proliferation and collagen production. Promotes Th17 differentiation of T-cells. Synergizes with IL12/interleukin-12 to induce IFNG synthesis from T-helper 1 (Th1) cells. Plays a role in angiogenesis by inducing VEGF production synergistically with TNF and IL6. Involved in transduction of inflammation downstream of pyroptosis: its mature form is specifically released in the extracellular milieu by passing through the gasdermin-D (GSDMD) pore. The polypeptide is Interleukin-1 beta (IL1B) (Macaca mulatta (Rhesus macaque)).